A 269-amino-acid polypeptide reads, in one-letter code: L-cystine-binding protein TcyJ (269 aa).

Residues 1 to 20 form the signal peptide; that stretch reads MNKRKGLVLLLSVFALLGGG. Cysteine 21 is lipidated: N-palmitoyl cysteine. The S-diacylglycerol cysteine moiety is linked to residue cysteine 21.

The protein belongs to the bacterial solute-binding protein 3 family. In terms of assembly, the complex is composed of two ATP-binding proteins (TcyN), two transmembrane proteins (TcyL and TcyM) and two solute-binding proteins (TcyJ and TcyK).

The protein localises to the cell membrane. Part of the ABC transporter complex TcyJKLMN involved in L-cystine import. Is also involved in cystathionine, djenkolate, and S-methylcysteine transport. This is L-cystine-binding protein TcyJ (tcyJ) from Bacillus subtilis (strain 168).